A 144-amino-acid chain; its full sequence is D-aminoacyl-tRNA deacylase (144 aa).

The Gly-cisPro motif, important for rejection of L-amino acids motif lies at 136 to 137; the sequence is GP.

It belongs to the DTD family. In terms of assembly, homodimer.

The protein localises to the cytoplasm. The catalysed reaction is glycyl-tRNA(Ala) + H2O = tRNA(Ala) + glycine + H(+). The enzyme catalyses a D-aminoacyl-tRNA + H2O = a tRNA + a D-alpha-amino acid + H(+). In terms of biological role, an aminoacyl-tRNA editing enzyme that deacylates mischarged D-aminoacyl-tRNAs. Also deacylates mischarged glycyl-tRNA(Ala), protecting cells against glycine mischarging by AlaRS. Acts via tRNA-based rather than protein-based catalysis; rejects L-amino acids rather than detecting D-amino acids in the active site. By recycling D-aminoacyl-tRNA to D-amino acids and free tRNA molecules, this enzyme counteracts the toxicity associated with the formation of D-aminoacyl-tRNA entities in vivo and helps enforce protein L-homochirality. This chain is D-aminoacyl-tRNA deacylase, found in Pasteurella multocida (strain Pm70).